The sequence spans 775 residues: Semaphorin-3E (775 aa).

The N-terminal stretch at 1–25 (MASAGHIITLLLWGYLLELWTGGHT) is a signal peptide. Residues 32 to 516 (RLRLSHKELL…SASAVAQVRF (485 aa)) enclose the Sema domain. N-linked (GlcNAc...) asparagine glycosylation occurs at asparagine 44. A disulfide bridge connects residues cysteine 105 and cysteine 115. A glycan (N-linked (GlcNAc...) asparagine) is linked at asparagine 126. 4 disulfide bridges follow: cysteine 133–cysteine 142, cysteine 270–cysteine 382, cysteine 294–cysteine 342, and cysteine 519–cysteine 537. Asparagine 330 is a glycosylation site (N-linked (GlcNAc...) asparagine). The Ig-like C2-type domain occupies 581–669 (ALDKTEEHLA…SFVHTVRKIT (89 aa)). 2 N-linked (GlcNAc...) asparagine glycosylation sites follow: asparagine 595 and asparagine 596. Cysteine 654 and cysteine 729 form a disulfide bridge. The segment at 742–775 (LKMSPSKWKYANPQEKKLRSKPEHYRLPRHTLDS) is disordered. Positions 755–775 (QEKKLRSKPEHYRLPRHTLDS) are enriched in basic and acidic residues.

It belongs to the semaphorin family. Interacts with PLXND1.

Its subcellular location is the secreted. Functionally, plays an important role in signaling via the cell surface receptor PLXND1. Mediates reorganization of the actin cytoskeleton, leading to the retraction of cell projections. Promotes focal adhesion disassembly and inhibits adhesion of endothelial cells to the extracellular matrix. Regulates angiogenesis, both during embryogenesis and after birth. Can down-regulate sprouting angiogenesis. Required for normal vascular patterning during embryogenesis. Plays an important role in ensuring the specificity of synapse formation. The protein is Semaphorin-3E (SEMA3E) of Homo sapiens (Human).